Reading from the N-terminus, the 332-residue chain is tRNA uridine(34) hydroxylase (332 aa).

The region spanning 127–221 is the Rhodanese domain; it reads SDPETVLIDT…YLEEVPKEKS (95 aa). C181 serves as the catalytic Cysteine persulfide intermediate. The interval 308–332 is disordered; the sequence is AKKLAQLNKQKKQQAKEAARKKAQQ. A compositionally biased stretch (basic and acidic residues) spans 321–332; it reads QAKEAARKKAQQ.

Belongs to the TrhO family.

The catalysed reaction is uridine(34) in tRNA + AH2 + O2 = 5-hydroxyuridine(34) in tRNA + A + H2O. Functionally, catalyzes oxygen-dependent 5-hydroxyuridine (ho5U) modification at position 34 in tRNAs. This chain is tRNA uridine(34) hydroxylase, found in Francisella tularensis subsp. tularensis (strain FSC 198).